The chain runs to 292 residues: Aquaporin-3 (292 aa).

Residues methionine 1–glutamine 24 lie on the Cytoplasmic side of the membrane. The helical transmembrane segment at alanine 25–serine 42 threads the bilayer. Over valine 43–phenylalanine 56 the chain is Extracellular. The helical transmembrane segment at leucine 57–alanine 74 threads the bilayer. At glycine 75–serine 78 the chain is on the cytoplasmic side. The segment at residues glycine 79–phenylalanine 92 is an intramembrane region (discontinuously helical). Residues asparagine 83–alanine 85 carry the NPA 1 motif. Topologically, residues leucine 93 to lysine 100 are cytoplasmic. A helical transmembrane segment spans residues leucine 101 to glycine 121. At leucine 122–asparagine 159 the chain is on the extracellular side. N-linked (GlcNAc...) asparagine glycosylation is present at asparagine 141. A helical membrane pass occupies residues glycine 160–alanine 177. Residues isoleucine 178–glycine 189 are Cytoplasmic-facing. A helical membrane pass occupies residues leucine 190–methionine 206. The Extracellular segment spans residues glycine 207 to serine 210. Positions glycine 211–leucine 224 form an intramembrane region, discontinuously helical. The short motif at asparagine 215–alanine 217 is the NPA 2 element. The Extracellular segment spans residues phenylalanine 225–tryptophan 242. The chain crosses the membrane as a helical span at residues tryptophan 243–methionine 264. The Cytoplasmic segment spans residues isoleucine 265–methionine 292.

This sequence belongs to the MIP/aquaporin (TC 1.A.8) family. As to quaternary structure, homotetramer; each monomer provides an independent glycerol/water pore. Could also exist in other oligomeric states.

The protein resides in the cell membrane. It is found in the basolateral cell membrane. The enzyme catalyses glycerol(in) = glycerol(out). The catalysed reaction is H2O(in) = H2O(out). It catalyses the reaction urea(in) = urea(out). It carries out the reaction H2O2(out) = H2O2(in). In terms of biological role, aquaglyceroporins form homotetrameric transmembrane channels, with each monomer independently mediating glycerol and water transport across the plasma membrane along their osmotic gradient. Could also be permeable to urea. Also participates in cell permeability to H2O2 and H2O2-mediated signaling. In skin, transports glycerol to the epidermis and stratum corneum, where it maintains hydration, elasticity, and supports lipid biosynthesis for barrier repair. In kidney, contributes to the reabsorption of water, helping the body maintain proper fluid balance. This is Aquaporin-3 from Bos taurus (Bovine).